A 642-amino-acid chain; its full sequence is Zinc finger protein 14 (642 aa).

One can recognise a KRAB domain in the interval 4–76; sequence VSFEDVAVNF…MVERLCESRK (73 aa). The C2H2-type 1 zinc-finger motif lies at 103 to 125; that stretch reads HECSFCGRDFMHHSSLNRHMRSH. A C2H2-type 2; degenerate zinc finger spans residues 141–163; it reads RKHKAVEKTFSYHHCFRKHERTH. The C2H2-type 3 zinc-finger motif lies at 169–191; it reads YECKQCGKAFIYYQPFQRHERTH. The C2H2-type 4; atypical zinc finger occupies 197-217; the sequence is YECKQCGKTFIYYQSFQQHAH. 15 consecutive C2H2-type zinc fingers follow at residues 223–245, 251–273, 279–301, 307–329, 335–357, 363–385, 391–413, 419–441, 447–469, 475–497, 503–525, 531–553, 559–581, 587–609, and 615–637; these read YECKQCGKAFICYQSFQRHERTH, YECKQCGKAFSCPTYFRTHERTH, YKCKECGKAFSFLSSFRRHKRTH, YECKECGKAFFYSASFRAHVITH, YKCKECGKAFNSSNSCRVHERTH, YECKQCGKSFSWSISLRLHERTH, YECKQCHKTFSFSSSLREHETTH, YECKQCGKTFSFSSSLQRHERTH, YECKQCGKAFRCSSYFRIHERSH, YECKQCGKVFIRSSSFRLHERTH, YECKLCSKTFSFSSSLREHEKIH, FECKQCGKAFLRSSQIRLHERTH, YQCKQCGKAFISSSKFRMHERTH, YRCKQCGKAFRFSSSVRIHERSH, and YECKQCGKAFISSSHFRLHERTH.

The protein belongs to the krueppel C2H2-type zinc-finger protein family.

Its subcellular location is the nucleus. Functionally, may be involved in transcriptional regulation. The chain is Zinc finger protein 14 (ZNF14) from Pongo abelii (Sumatran orangutan).